Consider the following 445-residue polypeptide: Flagellum-associated coiled-coil domain-containing protein 1 (445 aa).

Residues 26 to 47 form a disordered region; that stretch reads PQLPRKNSTGSSKLTPLVPAPK. A compositionally biased stretch (polar residues) spans 30–39; sequence RKNSTGSSKL. Coiled coils occupy residues 122–226 and 283–315; these read SRTN…TYQD and AVFE…TKEV. K376 carries the post-translational modification N6-acetyllysine. The stretch at 387-414 forms a coiled coil; sequence EKYKHTIQILTEENIHLKQKIISKNEEI.

The protein resides in the cytoplasm. The protein localises to the cytoplasmic granule. It localises to the cell projection. It is found in the cilium. Its subcellular location is the flagellum. The protein is Flagellum-associated coiled-coil domain-containing protein 1 of Homo sapiens (Human).